Here is a 156-residue protein sequence, read N- to C-terminus: MKNRSLALSQSILVLHGPNLNLLGVREPQHYGRDTLDDINRRLTQQAKAAGFSLSALQSNAEHILIERIHQCLDDGTAFILINPAAFTHTSVALRDALAAVKVPFIEVHLSNVHAREPFRQHSYFSDLALGVICGLGAHGYELALAHAMRHLSAQA.

Tyr-31 acts as the Proton acceptor in catalysis. The substrate site is built by Asn-83, His-89, and Asp-96. His-109 functions as the Proton donor in the catalytic mechanism. Substrate contacts are provided by residues 110 to 111 (LS) and Arg-120.

This sequence belongs to the type-II 3-dehydroquinase family. As to quaternary structure, homododecamer.

It carries out the reaction 3-dehydroquinate = 3-dehydroshikimate + H2O. It participates in metabolic intermediate biosynthesis; chorismate biosynthesis; chorismate from D-erythrose 4-phosphate and phosphoenolpyruvate: step 3/7. Its function is as follows. Catalyzes a trans-dehydration via an enolate intermediate. This is 3-dehydroquinate dehydratase from Chromobacterium violaceum (strain ATCC 12472 / DSM 30191 / JCM 1249 / CCUG 213 / NBRC 12614 / NCIMB 9131 / NCTC 9757 / MK).